Here is a 345-residue protein sequence, read N- to C-terminus: Biotin synthase (345 aa).

Residues 38–256 (RQVQVSTLLS…IAVARIMMPS (219 aa)) form the Radical SAM core domain. Residues Cys-53, Cys-57, and Cys-60 each contribute to the [4Fe-4S] cluster site. [2Fe-2S] cluster-binding residues include Cys-97, Cys-128, Cys-188, and Arg-260.

It belongs to the radical SAM superfamily. Biotin synthase family. In terms of assembly, homodimer. [4Fe-4S] cluster serves as cofactor. It depends on [2Fe-2S] cluster as a cofactor.

It carries out the reaction (4R,5S)-dethiobiotin + (sulfur carrier)-SH + 2 reduced [2Fe-2S]-[ferredoxin] + 2 S-adenosyl-L-methionine = (sulfur carrier)-H + biotin + 2 5'-deoxyadenosine + 2 L-methionine + 2 oxidized [2Fe-2S]-[ferredoxin]. It functions in the pathway cofactor biosynthesis; biotin biosynthesis; biotin from 7,8-diaminononanoate: step 2/2. Functionally, catalyzes the conversion of dethiobiotin (DTB) to biotin by the insertion of a sulfur atom into dethiobiotin via a radical-based mechanism. The polypeptide is Biotin synthase (Yersinia pseudotuberculosis serotype O:1b (strain IP 31758)).